The chain runs to 315 residues: Protease HtpX homolog (315 aa).

The helical transmembrane segment at 16-36 threads the bilayer; it reads LFMGIGYLIGGASGALIALVV. Residue H130 coordinates Zn(2+). The active site involves E131. H134 serves as a coordination point for Zn(2+). A run of 2 helical transmembrane segments spans residues 145–165 and 172–192; these read ITATIAGAISMVAQFGMFFGG and GPGLIGSLALMILAPLGAMLV. E201 is a Zn(2+) binding site. Positions 282–315 are disordered; that stretch reads GGGGASIGRPAGPSPRGAPRSPWSGQPRARGPWG. Residues 288 to 303 are compositionally biased toward low complexity; that stretch reads IGRPAGPSPRGAPRSP.

Belongs to the peptidase M48B family. Zn(2+) is required as a cofactor.

It localises to the cell inner membrane. The sequence is that of Protease HtpX homolog from Rhodopseudomonas palustris (strain BisB5).